The primary structure comprises 160 residues: MAFTFAAFCYMLTLVLCASLIFFVIWHIIAFDELRTDFKNPIDQGNPARARERLKNIERICCLLRKLVVPEYCIHGLFCLMFLCAAEWVTLGLNLPLLLYHLWRYFHRPSDGSEGLFDAVSIMDADILGYCQKEAWCKLAFYLLSFFYYLYSMVYTLVSF.

At 1-10 (MAFTFAAFCY) the chain is on the cytoplasmic side. The helical transmembrane segment at 11 to 31 (MLTLVLCASLIFFVIWHIIAF) threads the bilayer. Residues 32–72 (DELRTDFKNPIDQGNPARARERLKNIERICCLLRKLVVPEY) lie on the Lumenal side of the membrane. The chain crosses the membrane as a helical span at residues 73–93 (CIHGLFCLMFLCAAEWVTLGL). Residues 94-138 (NLPLLLYHLWRYFHRPSDGSEGLFDAVSIMDADILGYCQKEAWCK) lie on the Cytoplasmic side of the membrane. A helical transmembrane segment spans residues 139-159 (LAFYLLSFFYYLYSMVYTLVS). Phe-160 is a topological domain (lumenal).

The protein belongs to the cornichon family. In terms of assembly, interacts with HBEGF. In terms of tissue distribution, expressed in the odd-numbered neuromeres (r3 and r5) of the developing hindbrain.

The protein localises to the membrane. Its function is as follows. Regulates the trafficking and gating properties of AMPA-selective glutamate receptors (AMPARs). Plays an important role in the proper development of cranial nerves by facilitating the secretion of HBEGF. This chain is Protein cornichon homolog 2 (CNIH2), found in Gallus gallus (Chicken).